The sequence spans 630 residues: Forkhead box protein O (630 aa).

The segment at 1-45 (MDGFVQEWSNLPRSDNGLHMDQLVGELPTDGGFEPQTRARSNTWP) is disordered. Position 43 is a phosphothreonine; by PKB/AKT1 (T43). A DNA-binding region (fork-head) is located at residues 92–198 (WGNLSYADLI…ETSRYEKRRG (107 aa)). Residue S187 is modified to Phosphoserine; by PKB/AKT1. Positions 214–260 (GLNDATPSPSSSVSEGLDHFPESPLHSGGFQLSPDFRQRASSNASSC) are disordered. The segment covering 218–227 (ATPSPSSSVS) has biased composition (polar residues). S255 carries the post-translational modification Phosphoserine; by PKB/AKT1. S258, S259, and S264 each carry phosphoserine. Disordered stretches follow at residues 318–379 (SAAS…QQQQ) and 403–432 (TRDG…SLNT). Composition is skewed to low complexity over residues 332-350 (QQQQ…QLPQ) and 367-379 (QPQA…QQQQ). Composition is skewed to polar residues over residues 408 to 417 (SPNSVTTTMS) and 423 to 432 (SEPSSDSLNT).

In terms of assembly, interacts with melt.

Its subcellular location is the cytoplasm. The protein resides in the nucleus. Transcription factor involved in the regulation of the insulin signaling pathway. Consistently activates both the downstream target Thor\d4EBP and the feedback control target InR. Involved in negative regulation of the cell cycle, modulating cell growth and proliferation. In response to cellular stresses, such as nutrient deprivation or increased levels of reactive oxygen species, foxo is activated and inhibits growth through the action of target genes such as Thor. Foxo activated in the adult fat body can regulate lifespan in adults; an insulin peptide itself may function as one secondary messenger of insulin-regulated aging. Also regulates Lip4, homolog of human acid lipases, thereby acting as a key modulator of lipid metabolism by insulin signaling and integrates insulin responses to glucose and lipid homeostasis. In Drosophila grimshawi (Hawaiian fruit fly), this protein is Forkhead box protein O.